A 212-amino-acid polypeptide reads, in one-letter code: Probable nicotinate-nucleotide adenylyltransferase (212 aa).

It belongs to the NadD family.

It carries out the reaction nicotinate beta-D-ribonucleotide + ATP + H(+) = deamido-NAD(+) + diphosphate. It participates in cofactor biosynthesis; NAD(+) biosynthesis; deamido-NAD(+) from nicotinate D-ribonucleotide: step 1/1. Its function is as follows. Catalyzes the reversible adenylation of nicotinate mononucleotide (NaMN) to nicotinic acid adenine dinucleotide (NaAD). The protein is Probable nicotinate-nucleotide adenylyltransferase of Chromobacterium violaceum (strain ATCC 12472 / DSM 30191 / JCM 1249 / CCUG 213 / NBRC 12614 / NCIMB 9131 / NCTC 9757 / MK).